Here is a 513-residue protein sequence, read N- to C-terminus: Glycogen synthase (513 aa).

An ADP-alpha-D-glucose-binding site is contributed by K47.

It belongs to the glycosyltransferase 1 family. Bacterial/plant glycogen synthase subfamily.

It catalyses the reaction [(1-&gt;4)-alpha-D-glucosyl](n) + ADP-alpha-D-glucose = [(1-&gt;4)-alpha-D-glucosyl](n+1) + ADP + H(+). It functions in the pathway glycan biosynthesis; glycogen biosynthesis. Its function is as follows. Synthesizes alpha-1,4-glucan chains using ADP-glucose. This Pseudomonas aeruginosa (strain ATCC 15692 / DSM 22644 / CIP 104116 / JCM 14847 / LMG 12228 / 1C / PRS 101 / PAO1) protein is Glycogen synthase.